The following is a 267-amino-acid chain: MSYFESFILALIQGFTEFLPISSSAHLILPSAILGWEDQGLAFDVAVHVGTLAAVVLYFRKEVVSLLSAFFASIFKGDRSKEAKLAWLIVLATIPACLFGFVMKDIVELYLRSAWVIATTTIVFGLLLWYVDKHAELKADEYQADWKKALFIGLAQAVAIIPGTSRSGATITAALYLGFTREAAARFSFLMSIPIIVLAGSYLGLKLVTSGEPVHSGFLLTGIITSFISAYICIHFFLKLISRMGMTPFVIYRLVLGVGLFAFLLTQ.

Transmembrane regions (helical) follow at residues Met1–Ile21, Gln39–Phe59, Ala83–Met103, Leu111–Val131, Ala149–Ala169, Phe189–Thr209, Phe218–Leu238, and Gly245–Leu265.

This sequence belongs to the UppP family.

The protein localises to the cell inner membrane. It carries out the reaction di-trans,octa-cis-undecaprenyl diphosphate + H2O = di-trans,octa-cis-undecaprenyl phosphate + phosphate + H(+). Its function is as follows. Catalyzes the dephosphorylation of undecaprenyl diphosphate (UPP). Confers resistance to bacitracin. The sequence is that of Undecaprenyl-diphosphatase from Vibrio cholerae serotype O1 (strain ATCC 39315 / El Tor Inaba N16961).